A 282-amino-acid chain; its full sequence is Deoxyribonuclease-1 (282 aa).

A signal peptide spans M1–T20. The N-linked (GlcNAc...) asparagine glycan is linked to N38. Residue E98 is part of the active site. C121 and C124 are joined by a disulfide. The active site involves H154. C193 and C229 are disulfide-bonded.

This sequence belongs to the DNase I family. Ca(2+) is required as a cofactor. It depends on Mg(2+) as a cofactor. N-glycosylated.

The protein resides in the secreted. Its subcellular location is the zymogen granule. The protein localises to the nucleus envelope. It carries out the reaction Endonucleolytic cleavage to 5'-phosphodinucleotide and 5'-phosphooligonucleotide end-products.. Functionally, serum endocuclease secreted into body fluids by a wide variety of exocrine and endocrine organs. Expressed by non-hematopoietic tissues and preferentially cleaves protein-free DNA. Among other functions, seems to be involved in cell death by apoptosis. Binds specifically to G-actin and blocks actin polymerization. The polypeptide is Deoxyribonuclease-1 (DNASE1) (Gallus gallus (Chicken)).